The chain runs to 291 residues: Protease HtpX (291 aa).

2 helical membrane-spanning segments follow: residues 4-24 (IALFLATNLAVMIVFSIVLNI) and 36-56 (LSGLLVMAVLFGFGGSLVSLL). Position 143 (H143) interacts with Zn(2+). E144 is a catalytic residue. Residue H147 coordinates Zn(2+). 2 helical membrane-spanning segments follow: residues 151-171 (GDMITMTLMQGVVNTFVIFLS) and 199-219 (FIVSTVLEIAFGFLASFLTMW). E225 contributes to the Zn(2+) binding site.

This sequence belongs to the peptidase M48B family. Requires Zn(2+) as cofactor.

Its subcellular location is the cell inner membrane. This chain is Protease HtpX, found in Aliivibrio salmonicida (strain LFI1238) (Vibrio salmonicida (strain LFI1238)).